The primary structure comprises 291 residues: NAD kinase (291 aa).

The active-site Proton acceptor is the aspartate 73. NAD(+)-binding positions include 73–74 (DG), 147–148 (ND), arginine 175, aspartate 177, and glutamine 246.

Belongs to the NAD kinase family. Requires a divalent metal cation as cofactor.

The protein resides in the cytoplasm. The catalysed reaction is NAD(+) + ATP = ADP + NADP(+) + H(+). Its function is as follows. Involved in the regulation of the intracellular balance of NAD and NADP, and is a key enzyme in the biosynthesis of NADP. Catalyzes specifically the phosphorylation on 2'-hydroxyl of the adenosine moiety of NAD to yield NADP. This chain is NAD kinase, found in Laribacter hongkongensis (strain HLHK9).